The sequence spans 610 residues: tRNA uridine 5-carboxymethylaminomethyl modification enzyme MnmG (610 aa).

14–19 (GAGHAG) is an FAD binding site. Residue 274–288 (GPRYCPSIEDKIVKF) participates in NAD(+) binding.

The protein belongs to the MnmG family. As to quaternary structure, homodimer. Heterotetramer of two MnmE and two MnmG subunits. It depends on FAD as a cofactor.

It is found in the cytoplasm. Functionally, NAD-binding protein involved in the addition of a carboxymethylaminomethyl (cmnm) group at the wobble position (U34) of certain tRNAs, forming tRNA-cmnm(5)s(2)U34. In Chlamydia trachomatis serovar A (strain ATCC VR-571B / DSM 19440 / HAR-13), this protein is tRNA uridine 5-carboxymethylaminomethyl modification enzyme MnmG.